A 116-amino-acid polypeptide reads, in one-letter code: Protein Wnt-5b (116 aa).

Residue Ser1 is the site of O-palmitoleoyl serine; by PORCN attachment. N-linked (GlcNAc...) asparagine glycans are attached at residues Asn69 and Asn83. Cys82 and Cys97 form a disulfide bridge.

The protein belongs to the Wnt family. In terms of processing, palmitoleoylation is required for efficient binding to frizzled receptors. Depalmitoleoylation leads to Wnt signaling pathway inhibition.

It is found in the secreted. It localises to the extracellular space. The protein resides in the extracellular matrix. Functionally, ligand for members of the frizzled family of seven transmembrane receptors. Probable developmental protein. May be a signaling molecule which affects the development of discrete regions of tissues. Is likely to signal over only few cell diameters. The protein is Protein Wnt-5b (WNT-5B) of Alopias vulpinus (Common thresher shark).